Here is a 323-residue protein sequence, read N- to C-terminus: Fructokinase-1 (323 aa).

Belongs to the carbohydrate kinase PfkB family. In terms of tissue distribution, expressed in root, endosperm and leaf tissues.

It carries out the reaction D-fructose + ATP = D-fructose 6-phosphate + ADP + H(+). It participates in glycan biosynthesis; starch biosynthesis. Completely inhibited at 50 mM ATP, but not inhibited at high fructose concentration. In terms of biological role, fructokinase that may play an important role in maintaining the flux of carbon towards starch formation. May also be involved in a sugar-sensing pathway. This chain is Fructokinase-1, found in Oryza sativa subsp. japonica (Rice).